Here is a 406-residue protein sequence, read N- to C-terminus: Tyrosine--tRNA ligase (406 aa).

Y39 contacts L-tyrosine. Residues 44–53 (PTADSLHVGH) carry the 'HIGH' region motif. Residues Y172 and Q176 each contribute to the L-tyrosine site. The 'KMSKS' region motif lies at 232 to 236 (KMGKT). Position 235 (K235) interacts with ATP. The S4 RNA-binding domain occupies 344-404 (KELLDVLVDR…LGKKKFYNIV (61 aa)).

Belongs to the class-I aminoacyl-tRNA synthetase family. TyrS type 1 subfamily. As to quaternary structure, homodimer.

It is found in the cytoplasm. It carries out the reaction tRNA(Tyr) + L-tyrosine + ATP = L-tyrosyl-tRNA(Tyr) + AMP + diphosphate + H(+). Its function is as follows. Catalyzes the attachment of tyrosine to tRNA(Tyr) in a two-step reaction: tyrosine is first activated by ATP to form Tyr-AMP and then transferred to the acceptor end of tRNA(Tyr). The polypeptide is Tyrosine--tRNA ligase (Fusobacterium nucleatum subsp. nucleatum (strain ATCC 25586 / DSM 15643 / BCRC 10681 / CIP 101130 / JCM 8532 / KCTC 2640 / LMG 13131 / VPI 4355)).